A 263-amino-acid polypeptide reads, in one-letter code: Thiamine thiazole synthase (263 aa).

Residues S43, E62–R63, G70, V134, and H160–D162 contribute to the NAD(+) site. The Fe cation site is built by D162 and H177. Positions 180 and 227 each coordinate NAD(+). Glycine is bound at residue R237.

This sequence belongs to the THI4 family. In terms of assembly, homooctamer; tetramer of dimers. The cofactor is Fe(2+).

It catalyses the reaction hydrogen sulfide + glycine + NAD(+) = ADP-5-ethyl-4-methylthiazole-2-carboxylate + nicotinamide + 3 H2O + H(+). It functions in the pathway cofactor biosynthesis; thiamine diphosphate biosynthesis. Its function is as follows. Involved in the biosynthesis of the thiazole moiety of thiamine. Catalyzes the conversion of NAD and glycine to adenosine diphosphate 5-(2-hydroxyethyl)-4-methylthiazole-2-carboxylate (ADT), an adenylated thiazole intermediate, using free sulfide as a source of sulfur. The polypeptide is Thiamine thiazole synthase (Methanococcus aeolicus (strain ATCC BAA-1280 / DSM 17508 / OCM 812 / Nankai-3)).